Consider the following 90-residue polypeptide: Small ribosomal subunit protein bS18 (90 aa).

This sequence belongs to the bacterial ribosomal protein bS18 family. In terms of assembly, part of the 30S ribosomal subunit. Forms a tight heterodimer with protein bS6.

Functionally, binds as a heterodimer with protein bS6 to the central domain of the 16S rRNA, where it helps stabilize the platform of the 30S subunit. The sequence is that of Small ribosomal subunit protein bS18 from Bacteroides fragilis (strain YCH46).